We begin with the raw amino-acid sequence, 275 residues long: DNA polymerase II subunit B4 (275 aa).

Residues 11–17 mediate DNA binding; sequence LPLAIVR. Over residues 112–122 the composition is skewed to low complexity; sequence ASYPAGGAALK. The disordered stretch occupies residues 112-275; that stretch reads ASYPAGGAAL…EEVESDEEDE (164 aa). The Nuclear localization signal motif lies at 135 to 142; sequence KKRKQEEP. Residues 151–161 are compositionally biased toward basic and acidic residues; sequence SKIDEETKRND. The stretch at 152–179 forms a coiled coil; it reads KIDEETKRNDEETENDNTEEENGNDEED. Acidic residues-rich tracts occupy residues 162–237 and 266–275; these read EETE…EESG and EEVESDEEDE.

The protein belongs to the NFYB/HAP3 subunit family. As to quaternary structure, heterotrimeric transcription factor composed of three components, NF-YA, NF-YB and NF-YC. NF-YB and NF-YC must interact and dimerize for NF-YA association and DNA binding. Binds directly with DPB3-1.

The protein resides in the nucleus. Its function is as follows. Component of the NF-Y/HAP transcription factor complex. The NF-Y complex stimulates the transcription of various genes by recognizing and binding to a CCAAT motif in promoters. In Arabidopsis thaliana (Mouse-ear cress), this protein is DNA polymerase II subunit B4.